We begin with the raw amino-acid sequence, 123 residues long: MADETKPTRKGSPPIKVYCLPDERRAIEEKAAAAGMSLSAYLLAVGQGYKITGVVDYEHVRELARINGDLGRLGGLLKLWLTDDPRTARFGDATILALLAKIEEKQDELGKVMMGVVRPRAEP.

As to quaternary structure, monomer.

The protein resides in the cytoplasm. Its function is as follows. Transfer of plasmid RP4 during bacterial conjugation requires the plasmid-encoded TraJ protein, which binds to a 19-base pair invert sequence repetition within the transfer origin. TraJ protein is bound to only one side of the DNA helix. This nucleoprotein structure is the initial complex in the pathway to assemble a functional relaxosome. This Escherichia coli protein is Protein TraJ (traJ).